A 484-amino-acid chain; its full sequence is Phospholipase A1-Ialpha2, chloroplastic (484 aa).

The transit peptide at 1–63 (MALIQNPNMK…LAPVILNSPV (63 aa)) directs the protein to the chloroplast. The GXSXG signature appears at 295–299 (GHSMG). Residue S297 is the Acyl-ester intermediate of the active site. Residues D360 and H411 each act as charge relay system in the active site.

Belongs to the AB hydrolase superfamily. Lipase family. In terms of tissue distribution, ubiquitous. Highest expression in flowers and leaves.

Its subcellular location is the plastid. It localises to the chloroplast. The protein localises to the plastoglobule. It catalyses the reaction a 1,2-diacyl-3-O-[alpha-D-galactosyl-(1-&gt;6)-beta-D-galactosyl]-sn-glycerol + H2O = acyl-3-O-[alpha-D-galactosyl-(1-&gt;6)-beta-D-galactosyl]-sn-glycerol + a fatty acid + H(+). The enzyme catalyses a 1,2-diacyl-3-O-(beta-D-galactosyl)-sn-glycerol + H2O = an acyl-3-O-(beta-D-galactosyl)-sn-glycerol + a fatty acid + H(+). Acylhydrolase that catalyzes the hydrolysis of phosphatidylcholine at the sn-1 position. Has a strong galactolipase activity toward monogalactosyldiacylglycerol (MGDG) and digalactosyldiacylglycerol (DGDG). Low triacylglycerol (TAG) lipase activity. Plays a role in plant growth and in leaf senescence. This is Phospholipase A1-Ialpha2, chloroplastic from Arabidopsis thaliana (Mouse-ear cress).